The sequence spans 245 residues: Serine/arginine-rich splicing factor 1B (245 aa).

The RRM 1 domain maps to 15-90 (CRIYVGNLPP…YRLRVEFPRS (76 aa)). 2 disordered regions span residues 89 to 116 (RSGR…PPSR) and 192 to 245 (KVDG…RSRT). The segment covering 91–106 (GRGGGRGGGGGGGVGA) has biased composition (gly residues). Positions 120 to 194 (YRVIVSGLPP…ETAYIRVKVD (75 aa)) constitute an RRM 2 domain. A compositionally biased stretch (basic residues) spans 204 to 245 (SRSRSRSRSRSRSNSRSRSYSPRRSRGSPRYSPRHSRSRSRT).

Belongs to the splicing factor SR family.

It localises to the cytoplasm. Its subcellular location is the nucleus speckle. In terms of biological role, may play a role in preventing exon skipping, ensuring the accuracy of splicing and regulating alternative splicing. The protein is Serine/arginine-rich splicing factor 1B (srsf1b) of Danio rerio (Zebrafish).